A 334-amino-acid chain; its full sequence is Transaldolase (334 aa).

Catalysis depends on Lys136, which acts as the Schiff-base intermediate with substrate.

This sequence belongs to the transaldolase family. Type 1 subfamily. In terms of assembly, homodimer.

It is found in the cytoplasm. It carries out the reaction D-sedoheptulose 7-phosphate + D-glyceraldehyde 3-phosphate = D-erythrose 4-phosphate + beta-D-fructose 6-phosphate. It functions in the pathway carbohydrate degradation; pentose phosphate pathway; D-glyceraldehyde 3-phosphate and beta-D-fructose 6-phosphate from D-ribose 5-phosphate and D-xylulose 5-phosphate (non-oxidative stage): step 2/3. Its function is as follows. Transaldolase is important for the balance of metabolites in the pentose-phosphate pathway. The protein is Transaldolase of Nostoc punctiforme (strain ATCC 29133 / PCC 73102).